We begin with the raw amino-acid sequence, 392 residues long: Anhydro-N-acetylmuramic acid kinase (392 aa).

22–29 (GTSMDGVD) lines the ATP pocket.

This sequence belongs to the anhydro-N-acetylmuramic acid kinase family.

It catalyses the reaction 1,6-anhydro-N-acetyl-beta-muramate + ATP + H2O = N-acetyl-D-muramate 6-phosphate + ADP + H(+). Its pathway is amino-sugar metabolism; 1,6-anhydro-N-acetylmuramate degradation. It participates in cell wall biogenesis; peptidoglycan recycling. In terms of biological role, catalyzes the specific phosphorylation of 1,6-anhydro-N-acetylmuramic acid (anhMurNAc) with the simultaneous cleavage of the 1,6-anhydro ring, generating MurNAc-6-P. Is required for the utilization of anhMurNAc either imported from the medium or derived from its own cell wall murein, and thus plays a role in cell wall recycling. The protein is Anhydro-N-acetylmuramic acid kinase of Burkholderia pseudomallei (strain 1106a).